We begin with the raw amino-acid sequence, 322 residues long: Deoxyhypusine hydroxylase (322 aa).

HEAT-like PBS-type repeat units lie at residues 76 to 102 (LKHE…VLAD) and 109 to 135 (VRHE…YFKE). Positions 78, 79, 111, 112, 236, 237, 269, and 270 each coordinate Fe cation. One copy of the HEAT-like PBS-type 3 repeat lies at 267-293 (VRHEAAEALGSIATDDVLPVLKEHLKD).

This sequence belongs to the deoxyhypusine hydroxylase family. Requires Fe(2+) as cofactor.

It is found in the cytoplasm. The protein localises to the nucleus. The enzyme catalyses [eIF5A protein]-deoxyhypusine + AH2 + O2 = [eIF5A protein]-hypusine + A + H2O. It functions in the pathway protein modification; eIF5A hypusination. Catalyzes the hydroxylation of the N(6)-(4-aminobutyl)-L-lysine intermediate to form hypusine, an essential post-translational modification only found in mature eIF-5A factor. The polypeptide is Deoxyhypusine hydroxylase (Kluyveromyces lactis (strain ATCC 8585 / CBS 2359 / DSM 70799 / NBRC 1267 / NRRL Y-1140 / WM37) (Yeast)).